A 274-amino-acid chain; its full sequence is NADH-ubiquinone oxidoreductase chain 2 (274 aa).

A run of 8 helical transmembrane segments spans residues M28 to P48, L54 to I74, I79 to L99, L107 to E127, S128 to F148, F171 to P191, F206 to C226, and L254 to F274.

Belongs to the complex I subunit 2 family.

It localises to the mitochondrion inner membrane. The enzyme catalyses a ubiquinone + NADH + 5 H(+)(in) = a ubiquinol + NAD(+) + 4 H(+)(out). Core subunit of the mitochondrial membrane respiratory chain NADH dehydrogenase (Complex I) that is believed to belong to the minimal assembly required for catalysis. Complex I functions in the transfer of electrons from NADH to the respiratory chain. The immediate electron acceptor for the enzyme is believed to be ubiquinone. This chain is NADH-ubiquinone oxidoreductase chain 2 (mt:ND2), found in Drosophila sechellia (Fruit fly).